A 413-amino-acid chain; its full sequence is O-methyltransferase kntB (413 aa).

S-adenosyl-L-methionine contacts are provided by residues 255–256 (GG), Asp280, 302–303 (NF), and Arg319. The Proton acceptor role is filled by His322.

The protein belongs to the class I-like SAM-binding methyltransferase superfamily. Cation-independent O-methyltransferase family. It depends on S-adenosyl-L-methionine as a cofactor.

It functions in the pathway secondary metabolite biosynthesis. Its function is as follows. Non-reducing polyketide synthase; part of the gene cluster that mediates the biosynthesis of the bicoumarin kotanin. The non-reducing polyketide synthase ktnS first catalyzes the formation of the pentaketidic 4,7-dihydroxy-5-methylcoumarin from acetyl coenzyme A and 4 malonyl coenzyme A molecules. Further O-methylation by ktnB leads to the formation of 7-demethylsiderin. Then, an oxidative phenol coupling catalyzed by the cytochrome P450 monooxygenase ktnC forms the 8,8'-dimer P-orlandin via dimerization the monomeric precursor, 7-demethylsiderin. P-orlandin is subsequently O-methylated in a stepwise fashion to demethylkotanin and kotanin. The chain is O-methyltransferase kntB from Aspergillus niger (strain ATCC MYA-4892 / CBS 513.88 / FGSC A1513).